A 1275-amino-acid chain; its full sequence is Histone-lysine N-methyltransferase PRDM16 (1275 aa).

Residues 1 to 10 (MRSKARARKL) are compositionally biased toward basic residues. The tract at residues 1–66 (MRSKARARKL…SEDFTPKEGS (66 aa)) is disordered. The region spanning 82-211 (PDFELRESSI…PGEELLVHVK (130 aa)) is the SET domain. The C2H2-type 1; degenerate zinc-finger motif lies at 230-255 (FRCDECDELFQCRLDLRRHKKYACSS). C2H2-type zinc fingers lie at residues 282 to 304 (HECK…MIVH), 310 to 332 (YKCD…QMSH), 338 to 361 (FECE…RSQH), 367 to 389 (HACP…KHIH), and 395 to 417 (FICE…KRMH). A C2H2-type 7; atypical zinc finger spans residues 424 to 446 (IKCKDCGQMFSTTSSLNKHRRFC). Disordered stretches follow at residues 592-658 (VKNR…VPPG) and 789-838 (APKV…GVSE). The span at 610–625 (TTTGTDLDTTTGTGSD) shows a compositional bias: low complexity. Basic and acidic residues-rich tracts occupy residues 631–648 (DSDR…ESKP) and 821–835 (REPR…RKPG). The interval 680 to 1038 (EEQLLTASGA…KHEHEGAPVS (359 aa)) is interaction with CTBP1, CTBP2 and ZNF516. Positions 740 to 1275 (PFTDRALAHN…SGAFNPINHL (536 aa)) are mediates interaction with SKI and regulation of TGF-beta signaling. 3 consecutive C2H2-type zinc fingers follow at residues 951-973 (YTCR…LRTH), 979-1002 (YRCK…RNIH), and 1008-1030 (FKCH…LKKH). Disordered stretches follow at residues 1027–1065 (LKKH…HALL) and 1084–1169 (EMNQ…MGFD). Residues 1038 to 1058 (SQHSGVLTNHLGTSASSPTSE) show a composition bias toward polar residues. Acidic residues predominate over residues 1117–1133 (DVEEEEEEELEEEDDDS).

This sequence belongs to the PRDM16 family. As to quaternary structure, interacts with CEBPA, CEBPB and CEBPD; the interaction is direct. Interacts with PPARG and PPARA; controls brown adipocytes. Interacts with CTBP1 and CTBP2; represses the expression of WAT-specific genes. Interacts with PPARGC1A and PPARGC1B; interaction with PPARGC1A or PPARGC1B activates the transcription of BAT-specific gene. Interacts with HDAC1, SKI and SMAD2; the interaction with SKI promotes the recruitment of SMAD3-HDAC1 complex on the promoter of TGF-beta target genes. Interacts with ZNF516; the interaction is direct and may play a role in the transcription of brown adipose tissue-specific gene. As to expression, enriched in BAT compared to WAT. Detected in heart, lung, kidney and brain. Expressed in nuclei of cardiomyocytes.

Its subcellular location is the nucleus. The protein resides in the cytoplasm. It catalyses the reaction L-lysyl(9)-[histone H3] + S-adenosyl-L-methionine = N(6)-methyl-L-lysyl(9)-[histone H3] + S-adenosyl-L-homocysteine + H(+). Binds DNA and functions as a transcriptional regulator. Displays histone methyltransferase activity and monomethylates 'Lys-9' of histone H3 (H3K9me1) in vitro. Probably catalyzes the monomethylation of free histone H3 in the cytoplasm which is then transported to the nucleus and incorporated into nucleosomes where SUV39H methyltransferases use it as a substrate to catalyze histone H3 'Lys-9' trimethylation. Likely to be one of the primary histone methyltransferases along with MECOM/PRDM3 that direct cytoplasmic H3K9me1 methylation. Functions in the differentiation of brown adipose tissue (BAT) which is specialized in dissipating chemical energy in the form of heat in response to cold or excess feeding while white adipose tissue (WAT) is specialized in the storage of excess energy and the control of systemic metabolism. Together with CEBPB, regulates the differentiation of myoblastic precursors into brown adipose cells. Functions as a repressor of TGF-beta signaling. This chain is Histone-lysine N-methyltransferase PRDM16, found in Mus musculus (Mouse).